Here is a 339-residue protein sequence, read N- to C-terminus: DNA-directed RNA polymerase subunit alpha (339 aa).

Positions 1-233 (MVREEVAGST…DLFLPFLHAE (233 aa)) are alpha N-terminal domain (alpha-NTD). The tract at residues 264–339 (KKGIPLNCIF…IDLLKNKLSF (76 aa)) is alpha C-terminal domain (alpha-CTD).

This sequence belongs to the RNA polymerase alpha chain family. As to quaternary structure, in plastids the minimal PEP RNA polymerase catalytic core is composed of four subunits: alpha, beta, beta', and beta''. When a (nuclear-encoded) sigma factor is associated with the core the holoenzyme is formed, which can initiate transcription.

It localises to the plastid. The protein resides in the chloroplast. The enzyme catalyses RNA(n) + a ribonucleoside 5'-triphosphate = RNA(n+1) + diphosphate. DNA-dependent RNA polymerase catalyzes the transcription of DNA into RNA using the four ribonucleoside triphosphates as substrates. The polypeptide is DNA-directed RNA polymerase subunit alpha (Secale strictum (Mountain rye)).